The chain runs to 372 residues: L-selectin (372 aa).

Residues 1–28 form the signal peptide; the sequence is MIFPWKCQSTQRDLWNIFKLWGWTMLCC. Positions 29-38 are excised as a propeptide; it reads DFLAHHGTDC. Residues 39-332 are Extracellular-facing; it reads WTYHYSEKPM…FSMIKEGDYN (294 aa). The 101-residue stretch at 55–155 folds into the C-type lectin domain; it reads RFCRDNYTDL…ACHKLKAALC (101 aa). Disulfide bonds link Cys-57–Cys-155, Cys-128–Cys-147, Cys-160–Cys-171, Cys-165–Cys-180, Cys-182–Cys-191, Cys-197–Cys-241, Cys-227–Cys-254, Cys-259–Cys-303, and Cys-289–Cys-316. 2 N-linked (GlcNAc...) asparagine glycosylation sites follow: Asn-60 and Asn-104. Residues Glu-118, Asn-120, Glu-126, Asn-143, and Asp-144 each coordinate Ca(2+). One can recognise an EGF-like domain in the interval 156–192; it reads YTASCQPWSCSGHGECVEIINNYTCNCDVGYYGPQCQ. Residue Asn-177 is glycosylated (N-linked (GlcNAc...) asparagine). Sushi domains lie at 195–256 and 257–318; these read IQCE…TCQV and IQCE…ICQK. N-linked (GlcNAc...) asparagine glycans are attached at residues Asn-232, Asn-246, and Asn-271. A helical membrane pass occupies residues 333 to 355; it reads PLFIPVAVMVTAFSGLAFIIWLA. The Cytoplasmic segment spans residues 356–372; the sequence is RRLKKGKKSKRSMNDPY.

This sequence belongs to the selectin/LECAM family. In terms of assembly, interaction with SELPLG/PSGL1 and PODXL2 is required for promoting recruitment and rolling of leukocytes. This interaction is dependent on the sialyl Lewis X glycan modification of SELPLG and PODXL2, and tyrosine sulfation modifications of SELPLG. Sulfation on 'Tyr-51' of SELPLG is important for L-selectin binding. N-glycosylated. Expressed in B-cell lines and T-lymphocytes.

The protein resides in the cell membrane. In terms of biological role, calcium-dependent lectin that mediates cell adhesion by binding to glycoproteins on neighboring cells. Mediates the adherence of lymphocytes to endothelial cells of high endothelial venules in peripheral lymph nodes. Promotes initial tethering and rolling of leukocytes in endothelia. The chain is L-selectin (SELL) from Homo sapiens (Human).